We begin with the raw amino-acid sequence, 132 residues long: D-ribose pyranase (132 aa).

The active-site Proton donor is His-20. Substrate is bound by residues Asp-28, His-99, and 121–123; that span reads YAN.

Belongs to the RbsD / FucU family. RbsD subfamily. In terms of assembly, homodecamer.

It localises to the cytoplasm. It catalyses the reaction beta-D-ribopyranose = beta-D-ribofuranose. It functions in the pathway carbohydrate metabolism; D-ribose degradation; D-ribose 5-phosphate from beta-D-ribopyranose: step 1/2. Functionally, catalyzes the interconversion of beta-pyran and beta-furan forms of D-ribose. This is D-ribose pyranase from Chromobacterium violaceum (strain ATCC 12472 / DSM 30191 / JCM 1249 / CCUG 213 / NBRC 12614 / NCIMB 9131 / NCTC 9757 / MK).